The primary structure comprises 692 residues: Sodium- and chloride-dependent glycine transporter 1 (692 aa).

The interval 1–34 (MIGGDTRAASAHPGMASAQGPVATPSPEQPFPGT) is disordered. The Cytoplasmic segment spans residues 1 to 94 (MIGGDTRAAS…TRGNWGNQIE (94 aa)). A run of 3 helical transmembrane segments spans residues 95 to 115 (FVLT…FPYL), 122 to 142 (GAFM…LFFM), and 174 to 194 (VSTY…YYFF). Topologically, residues 195–271 (SSMTHVLPWA…LSDDIGNFGE (77 aa)) are extracellular. A run of 9 helical transmembrane segments spans residues 272-292 (VRLP…LCLI), 301-321 (VVYF…VRGV), 346-366 (VWGD…GGLI), 393-413 (SVYA…HLGV), 436-456 (LLPI…LLGL), 492-512 (VAGF…WLLL), 516-536 (YAAS…IMYI), 556-576 (LFFQ…ILIF), and 596-616 (VAIG…YALF). At 617-692 (QLCRTDGDTL…GSSRFQDSRI (76 aa)) the chain is on the cytoplasmic side. Thr657 bears the Phosphothreonine mark. 2 positions are modified to phosphoserine: Ser659 and Ser684. Positions 681-692 (SNGSSRFQDSRI) are essential for interaction with EXOC1.

The protein belongs to the sodium:neurotransmitter symporter (SNF) (TC 2.A.22) family. SLC6A9 subfamily. Interacts with EXOC1; interaction increases the transporter capacity of SLC6A9 probably by promoting its insertion into the cell membrane. Interacts with EXOC3 and EXOC4. As to expression, expressed in the brain (at protein level). At 11 dpc, expressed in the ventral part of the ventricular zone. At 15 dpc, also expressed in adjacent mantle tissue and the meninges. Strongly expressed in 12 dpc and 15 dpc liver. Expressed in the brain.

Its subcellular location is the cell membrane. The catalysed reaction is glycine(out) + chloride(out) + 2 Na(+)(out) = glycine(in) + chloride(in) + 2 Na(+)(in). In terms of biological role, sodium- and chloride-dependent glycine transporter which is essential for regulating glycine concentrations at inhibitory glycinergic synapses. Functionally, sodium- and chloride-dependent glycine transporter. The polypeptide is Sodium- and chloride-dependent glycine transporter 1 (Slc6a9) (Mus musculus (Mouse)).